A 640-amino-acid polypeptide reads, in one-letter code: 2-hydroxyacyl-CoA lyase 2 (640 aa).

Residues valine 2–valine 22 traverse the membrane as a helical segment. Glutamate 102 is a binding site for thiamine diphosphate. The tract at residues aspartate 477–cysteine 557 is thiamine pyrophosphate binding. Aspartate 528 and asparagine 554 together coordinate Mg(2+).

Belongs to the TPP enzyme family. Mg(2+) is required as a cofactor. The cofactor is thiamine diphosphate.

Its subcellular location is the endoplasmic reticulum membrane. It carries out the reaction 2-hydroxyoctadecanoyl-CoA = heptadecanal + formyl-CoA. The enzyme catalyses (2R)-hydroxyhexadecanoyl-CoA = pentadecanal + formyl-CoA. Functionally, endoplasmic reticulum 2-OH acyl-CoA lyase involved in the cleavage (C1 removal) reaction in the fatty acid alpha-oxydation in a thiamine pyrophosphate (TPP)-dependent manner. This Caenorhabditis elegans protein is 2-hydroxyacyl-CoA lyase 2.